The following is a 298-amino-acid chain: Transcription factor bHLH114 (298 aa).

The stretch at 117–149 forms a coiled coil; that stretch reads LDHEIRNHKSSKEQITQDYKNLTSKRSEELEEN. Residues 126 to 154 are disordered; sequence SSKEQITQDYKNLTSKRSEELEENSDEYS. Positions 129–140 are enriched in polar residues; the sequence is EQITQDYKNLTS. The bHLH domain occupies 163–212; sequence LETLSPLPSFKVRKEKLGDRITALQQLVSPFGKTDTASVLNEAVEYIKFL.

In terms of assembly, homodimer. In terms of tissue distribution, differentiating root endodermis.

The protein localises to the nucleus. In Arabidopsis thaliana (Mouse-ear cress), this protein is Transcription factor bHLH114 (BHLH114).